The primary structure comprises 102 residues: RNA-binding protein Hfq (102 aa).

One can recognise a Sm domain in the interval 9–68 (DPFLNALRRERVPVSIYLVNGIKLQGQIESFDQFVILLKNTVSQMVYKHAISTVVPSRPV). Residues 63 to 102 (VPSRPVSHHSNNAGGSTSSNYHHGSSAQNTSAQQDSEENE) form a disordered region. The segment covering 70–96 (HHSNNAGGSTSSNYHHGSSAQNTSAQQ) has biased composition (polar residues).

It belongs to the Hfq family. As to quaternary structure, homohexamer.

In terms of biological role, RNA chaperone that binds small regulatory RNA (sRNAs) and mRNAs to facilitate mRNA translational regulation in response to envelope stress, environmental stress and changes in metabolite concentrations. Also binds with high specificity to tRNAs. The sequence is that of RNA-binding protein Hfq from Escherichia coli O17:K52:H18 (strain UMN026 / ExPEC).